The sequence spans 525 residues: Allantoate deiminase (525 aa).

Residues 1–53 form the signal peptide; the sequence is MAVPHPSSSSSRSHPFLSHVYHTSFHHHHHHNHPSLVLFWCLVFSLLSPLALS. Residues 56–75 are compositionally biased toward low complexity; it reads SSSSSSSSDSSSSSSSHISL. A disordered region spans residues 56-78; the sequence is SSSSSSSSDSSSSSSSHISLGIG. N-linked (GlcNAc...) asparagine glycosylation is present at asparagine 156. Residues histidine 167, aspartate 178, glutamate 215, histidine 281, and histidine 499 each contribute to the Mn(2+) site.

The protein belongs to the peptidase M20A family. In terms of assembly, homodimer. The cofactor is Mn(2+). Expressed in seedlings, roots, stems, leaves, flowers, siliques and seeds.

The protein resides in the endoplasmic reticulum. The enzyme catalyses allantoate + H2O + 2 H(+) = (S)-2-ureidoglycine + NH4(+) + CO2. Inhibited by borate, fluoride, L-Asn and L-Asp, but not by phenylphosphorodiamidate. Involved in the catabolism of purine nucleotides. Can use allantoate as substrate, but not Nalpha-carbamoyl-L-Asp, Nalpha-carbamoyl-L-Ala or Nalpha-carbamoyl-Gly. The sequential activity of AAH, UGLYAH and UAH allows a complete purine breakdown without the intermediate generation of urea. Involved in the regulation of seed maturation and seed dormancy. The chain is Allantoate deiminase from Arabidopsis thaliana (Mouse-ear cress).